The primary structure comprises 308 residues: Acetylglutamate kinase (308 aa).

Residues 64 to 65 (GG), arginine 86, and asparagine 192 each bind substrate.

This sequence belongs to the acetylglutamate kinase family. ArgB subfamily.

It localises to the cytoplasm. The enzyme catalyses N-acetyl-L-glutamate + ATP = N-acetyl-L-glutamyl 5-phosphate + ADP. Its pathway is amino-acid biosynthesis; L-arginine biosynthesis; N(2)-acetyl-L-ornithine from L-glutamate: step 2/4. Functionally, catalyzes the ATP-dependent phosphorylation of N-acetyl-L-glutamate. This chain is Acetylglutamate kinase, found in Myxococcus xanthus (strain DK1622).